The following is a 298-amino-acid chain: Specificity protein transcription factor 1 (298 aa).

Residues 206-218 (VSSGSESVSARGT) show a composition bias toward low complexity. Positions 206–233 (VSSGSESVSARGTSGSGGTGKYPSSRTA) are disordered. Residues 260–284 (HNCHIAGCGKVYNKSSHLKAHLRWH) form a C2H2-type zinc finger.

This sequence belongs to the Sp1 C2H2-type zinc-finger protein family. As to expression, expressed in ASJ sensory neurons, pharyngeal cells, rectal cells, intestine, seam cells, and vulval cells.

Its function is as follows. Probable transcription factor which modulates gene expression, thereby acting as an ASJ sensory neuron terminal selector gene. The chain is Specificity protein transcription factor 1 from Caenorhabditis elegans.